Consider the following 284-residue polypeptide: 2-dehydro-3-deoxyphosphooctonate aldolase (284 aa).

This sequence belongs to the KdsA family.

It is found in the cytoplasm. It carries out the reaction D-arabinose 5-phosphate + phosphoenolpyruvate + H2O = 3-deoxy-alpha-D-manno-2-octulosonate-8-phosphate + phosphate. It functions in the pathway carbohydrate biosynthesis; 3-deoxy-D-manno-octulosonate biosynthesis; 3-deoxy-D-manno-octulosonate from D-ribulose 5-phosphate: step 2/3. Its pathway is bacterial outer membrane biogenesis; lipopolysaccharide biosynthesis. This chain is 2-dehydro-3-deoxyphosphooctonate aldolase, found in Shigella boydii serotype 18 (strain CDC 3083-94 / BS512).